We begin with the raw amino-acid sequence, 118 residues long: Putative membrane protein insertion efficiency factor (118 aa).

The protein belongs to the UPF0161 family.

It localises to the cell inner membrane. In terms of biological role, could be involved in insertion of integral membrane proteins into the membrane. The protein is Putative membrane protein insertion efficiency factor of Helicobacter pylori (strain HPAG1).